A 362-amino-acid polypeptide reads, in one-letter code: MTKKTQVGLIFGGNSSEYEVSITSAGNIYKAIDKDKFDVHPIWITNSGYVASEADSYKVLEEPGYMVEKNDKTANLSNLIELASRPELDVLFPIVHGNLGEDGVLQGLFRLIDKPFVGVDVLAAAVTMDKEFTKILAQRAGVPVAKWVSIKRYEYEDAKNQKLSYDWVSGQLGTSNLFVKPSNQGSSVGITHVTDDSNYAEALAEAFKYDDKVLVEEGIVGTEVETAVLGNDHPVVSGVGQIINADNTWYSYENKYSTESTTTLQIPAQIPAETAEKVQENALKIYQITECSGMARVDSMLRESDGEVIFNELNALPGFTNISMYPKLFEEAGISYPDLITRLIRLAEERYAHKKTILHKHD.

Positions 134–345 (KILAQRAGVP…YPDLITRLIR (212 aa)) constitute an ATP-grasp domain. 170 to 225 (GQLGTSNLFVKPSNQGSSVGITHVTDDSNYAEALAEAFKYDDKVLVEEGIVGTEVE) contacts ATP. Aspartate 298, glutamate 312, and asparagine 314 together coordinate Mg(2+).

This sequence belongs to the D-alanine--D-alanine ligase family. Mg(2+) is required as a cofactor. The cofactor is Mn(2+).

It is found in the cytoplasm. It catalyses the reaction 2 D-alanine + ATP = D-alanyl-D-alanine + ADP + phosphate + H(+). It participates in cell wall biogenesis; peptidoglycan biosynthesis. Its function is as follows. Cell wall formation. The chain is D-alanine--D-alanine ligase from Lactobacillus delbrueckii subsp. bulgaricus (strain ATCC BAA-365 / Lb-18).